Reading from the N-terminus, the 148-residue chain is Lysozyme C-3 (148 aa).

The N-terminal stretch at 1 to 18 is a signal peptide; it reads MKTLLVLALLLLSVSVQA. The 130-residue stretch at 19 to 148 folds into the C-type lysozyme domain; that stretch reads KVYDRCEFAR…VSQYIRGCKL (130 aa). Intrachain disulfides connect Cys24–Cys146, Cys48–Cys134, Cys83–Cys99, and Cys95–Cys113. Catalysis depends on residues Glu53 and Asp71.

This sequence belongs to the glycosyl hydrolase 22 family. In terms of assembly, monomer.

The protein resides in the secreted. It carries out the reaction Hydrolysis of (1-&gt;4)-beta-linkages between N-acetylmuramic acid and N-acetyl-D-glucosamine residues in a peptidoglycan and between N-acetyl-D-glucosamine residues in chitodextrins.. Functionally, lysozymes have primarily a bacteriolytic function; those in tissues and body fluids are associated with the monocyte-macrophage system and enhance the activity of immunoagents. This is Lysozyme C-3 from Sus scrofa (Pig).